Consider the following 395-residue polypeptide: 1-deoxy-D-xylulose 5-phosphate reductoisomerase (395 aa).

NADPH contacts are provided by threonine 10, glycine 11, serine 12, isoleucine 13, asparagine 38, and asparagine 122. Position 123 (lysine 123) interacts with 1-deoxy-D-xylulose 5-phosphate. An NADPH-binding site is contributed by glutamate 124. Aspartate 148 serves as a coordination point for Mn(2+). Residues serine 149, glutamate 150, serine 178, and histidine 200 each coordinate 1-deoxy-D-xylulose 5-phosphate. Glutamate 150 serves as a coordination point for Mn(2+). Glycine 206 serves as a coordination point for NADPH. 1-deoxy-D-xylulose 5-phosphate-binding residues include serine 213, asparagine 218, lysine 219, and glutamate 222. Glutamate 222 contributes to the Mn(2+) binding site.

It belongs to the DXR family. Requires Mg(2+) as cofactor. Mn(2+) serves as cofactor.

The catalysed reaction is 2-C-methyl-D-erythritol 4-phosphate + NADP(+) = 1-deoxy-D-xylulose 5-phosphate + NADPH + H(+). Its pathway is isoprenoid biosynthesis; isopentenyl diphosphate biosynthesis via DXP pathway; isopentenyl diphosphate from 1-deoxy-D-xylulose 5-phosphate: step 1/6. Catalyzes the NADPH-dependent rearrangement and reduction of 1-deoxy-D-xylulose-5-phosphate (DXP) to 2-C-methyl-D-erythritol 4-phosphate (MEP). The chain is 1-deoxy-D-xylulose 5-phosphate reductoisomerase from Elusimicrobium minutum (strain Pei191).